The primary structure comprises 1147 residues: Protein efr3 (1147 aa).

4 disordered regions span residues 582–615 (KVKERTGRPASQPAKNDLSDPTERPGKRTASMSG), 877–929 (VHQN…ESPV), 942–1097 (EEGK…EPNA), and 1114–1147 (FLSPADAETRGSRRKARSNTGRRGVSGGLGRPPY). Positions 598–607 (DLSDPTERPG) are enriched in basic and acidic residues. Residues 883 to 897 (SSPSASSNASVPQSA) show a composition bias toward low complexity. Polar residues predominate over residues 903–926 (GLQNAQRTSVPNSSGSQLISTSRE). Over residues 959 to 978 (SNRSVISSSSDSMVSGYSLS) the composition is skewed to low complexity. Polar residues predominate over residues 1057 to 1072 (SVTNGKAGTPSTSPGR). Residues 1137 to 1147 (GVSGGLGRPPY) are compositionally biased toward gly residues.

The protein belongs to the EFR3 family.

In Aspergillus oryzae (strain ATCC 42149 / RIB 40) (Yellow koji mold), this protein is Protein efr3 (efr3).